The sequence spans 1498 residues: MIFSQGASPLKGDFTRIKFSIASPESILAHSRGEVLKPETINYRTFKPERDGLMCEKIFGPTKDWECYCGKYKRVRYKGIICDRCGVEVTTKSVRRERMGHISLAVPVVHTWFFRSVPSKIGALLDLSTKELERIIYYEVYVVINPGEPGEKQGIKKLDRLTEEQYFQIITEYEDNQDLEDSDPQKFVAKMGGEAIHMLLKNLDLDGSAVLLRKILKESSSEQKRADALKRLKVVEAFRKSYEPQRKVRKKSTGLFPEDDIPEPYIYEGNKPEYMVMEAIPVIPPELRPLVPLEGGRFATSDLNDLYRRVIIRNNRLKKLIDIRAPEVILRNEKRMLQEAVDALFDNSRKANAVKTGESNRPLKSLSDALKGKQGRFRQNLLGKRVDYSGRSVIVVGPELKLHECGLPKSMAIELFQPFVIRRLVERGIAKSVKSAKKLIDKKDPIVWDVLEKVIDGRPVLLNRAPTLHRLGIQAFQPTLIEGKAIQIHPLVCTAFNADFDGDQMAVHVPLSQEAQLEASLLMLSSHNLILPQSGKPVTVPSQDMVLGMYYLTKSRPGSLGEAGIFYSREDVLIAHNEGRLGLHAQIFVQYDGRLDQKFDSLRALDWILEAGTEKYEWLKKQLEKKTMLLTTVGRVIFNESVPEEIGFINRVIDKKVAKELIGRLSSEVGNVETARFLDNIKQVGFHYAMKGGLSVGLSDAIVPETKAKHIKAAQRDSTRVVKEYNRGTLTDNERYNQIVDVWQKTSNIVAEESYQKLKKDREGFNPLYMMLDSGARGSREQVRQLTGMRGLIARPQKSMSGQPGEIIENPIISNLKEGLTVLEYFISTHGARKGLSDTSLKTADAGYLTRRLHDVAQDVIVTMDDCGTTRGLFIQRNIEEETSGQIKFREKIKGRVAARDIYDTITGNVIVPAGETITEELAEIIQDTPGVEEAEIRSVLTCESKIGICSRCYGTNLSVHKLVEIGEAVGVIAAQSIGEPGTQLTLRTFHQGGTAQGGISETETKAFNEGTVEFEDIKTVYHAAINEDGVEEQHTIVIQKNGKINIVDAESGKVLKRYVVPHGAHLAVAPGDQVKKDQVLFSSEPNSTQIIAEINGTVKFADIEKGVTYKEEVDPQTGFAQHTIINWRSKLRATETREPRLMIIDASGEVQKTYPVPIKSNLYVEDGQKVVPGDIMAKVPRNLDRVGGDITAGLPKVTELFEARIPTDPAIVTEIDGYVSFGSQRRSSKEIKVKNDFGEEKVYYVQVGKHVLANEGDEVKAGEPLTDGAVSPQDILRIQGPNAVQQYLVNEIQKVYQINAGVEINDKHLEVIVRQMLQKVRVEEPGDTELLPGDLIDRSVFLEANENVSEKVRISERGDAPPRIQDDQLHRLREITKLNRDLRKNEKQLIAFEPALQATSHPVLLGITSAALQTESVISAASFQETTKVLTDAAVAGKVDHLAGLKENVIVGKLIPAGTGLKKYKAIRLGGEAIEASDAAAAAAEAEAQARREAMDE.

Zn(2+) contacts are provided by C67, C69, C82, and C85. Mg(2+) contacts are provided by D499, D501, and D503. C867, C943, C950, and C953 together coordinate Zn(2+).

This sequence belongs to the RNA polymerase beta' chain family. In terms of assembly, the RNAP catalytic core consists of 2 alpha, 1 beta, 1 beta' and 1 omega subunit. When a sigma factor is associated with the core the holoenzyme is formed, which can initiate transcription. It depends on Mg(2+) as a cofactor. Zn(2+) is required as a cofactor.

It catalyses the reaction RNA(n) + a ribonucleoside 5'-triphosphate = RNA(n+1) + diphosphate. DNA-dependent RNA polymerase catalyzes the transcription of DNA into RNA using the four ribonucleoside triphosphates as substrates. The protein is DNA-directed RNA polymerase subunit beta' of Chlorobium luteolum (strain DSM 273 / BCRC 81028 / 2530) (Pelodictyon luteolum).